A 122-amino-acid polypeptide reads, in one-letter code: Large ribosomal subunit protein uL18 (122 aa).

Positions 1 to 21 (MSKLSRKQQTQKRHRRLRRHL) are enriched in basic residues. The disordered stretch occupies residues 1–26 (MSKLSRKQQTQKRHRRLRRHLTGTSD).

This sequence belongs to the universal ribosomal protein uL18 family. Part of the 50S ribosomal subunit; part of the 5S rRNA/L5/L18/L25 subcomplex. Contacts the 5S and 23S rRNAs.

Its function is as follows. This is one of the proteins that bind and probably mediate the attachment of the 5S RNA into the large ribosomal subunit, where it forms part of the central protuberance. The sequence is that of Large ribosomal subunit protein uL18 from Parasynechococcus marenigrum (strain WH8102).